A 339-amino-acid polypeptide reads, in one-letter code: Coproporphyrin III ferrochelatase (339 aa).

Residues Ser52 and Tyr121 each contribute to the Fe-coproporphyrin III site. Fe(2+) is bound by residues His181 and Glu264.

Belongs to the ferrochelatase family.

It is found in the cytoplasm. The catalysed reaction is Fe-coproporphyrin III + 2 H(+) = coproporphyrin III + Fe(2+). Its pathway is porphyrin-containing compound metabolism; protoheme biosynthesis. Involved in coproporphyrin-dependent heme b biosynthesis. Catalyzes the insertion of ferrous iron into coproporphyrin III to form Fe-coproporphyrin III. The sequence is that of Coproporphyrin III ferrochelatase from Mycolicibacterium vanbaalenii (strain DSM 7251 / JCM 13017 / BCRC 16820 / KCTC 9966 / NRRL B-24157 / PYR-1) (Mycobacterium vanbaalenii).